The sequence spans 367 residues: Peptide chain release factor 2 (367 aa).

Gln-254 is subject to N5-methylglutamine.

Belongs to the prokaryotic/mitochondrial release factor family. Post-translationally, methylated by PrmC. Methylation increases the termination efficiency of RF2.

It is found in the cytoplasm. In terms of biological role, peptide chain release factor 2 directs the termination of translation in response to the peptide chain termination codons UGA and UAA. This Neisseria meningitidis serogroup B (strain ATCC BAA-335 / MC58) protein is Peptide chain release factor 2.